Here is a 145-residue protein sequence, read N- to C-terminus: Bacilliredoxin BrxB (145 aa).

Active-site nucleophile residues include cysteine 52 and cysteine 54. Cysteine 52 is subject to S-bacillithiol cysteine disulfide. Positions 52–54 match the CXC active site motif motif; sequence CGC. An intrachain disulfide couples cysteine 52 to cysteine 54.

Belongs to the bacilliredoxin family. As to quaternary structure, interacts with BrxC. Post-translationally, N-terminal Cys of the CXC active site motif can react with bacillithiol (BSH) to form mixed disulfides. S-bacillithiolation protects Cys residues against overoxidation by acting as a redox switch in response to oxidative stress.

In terms of biological role, S-bacillithiolation is the formation of mixed disulfide bonds between protein thiols and the general thiol reductant bacillithiol (BSH) under oxidative stress. BSH is an equivalent of glutathione (GSH) in Firmicutes. This protein is a dithiol bacilliredoxin, which debacillithiolates (removes BSH) the S-bacillithiolated OhrR (OhrR-SSB) in vitro and in vivo NaOCl-generated S-bacillithiolated MetE (MetE-SSB). Involved in maintaining redox homeostasis in response to disulfide stress conditions. The sequence is that of Bacilliredoxin BrxB from Bacillus subtilis (strain 168).